The sequence spans 418 residues: Zinc metalloproteinase-disintegrin-like batroxstatin-2 (418 aa).

Positions 10–206 (KYVKLVLVAD…DMPQCILEKP (197 aa)) constitute a Peptidase M12B domain. 3 cysteine pairs are disulfide-bonded: C121–C201, C161–C185, and C163–C168. A Zn(2+)-binding site is contributed by H146. E147 is a catalytic residue. Zn(2+)-binding residues include H150 and H156. Residues 214 to 299 (PPVCGNYFVE…AECTDRFQRN (86 aa)) form the Disintegrin domain. Positions 216, 219, 221, 223, 226, and 229 each coordinate Ca(2+). 14 disulfides stabilise this stretch: C217–C246, C228–C241, C230–C236, C240–C263, C254–C260, C259–C285, C272–C292, C279–C310, C303–C315, C322–C372, C337–C383, C350–C360, C367–C409, and C403–C414. The D/ECD-tripeptide motif lies at 278-280 (ECD). Ca(2+) is bound by residues D280, M281, D283, D294, and R295. N-linked (GlcNAc...) asparagine glycosylation is present at N312.

Belongs to the venom metalloproteinase (M12B) family. P-III subfamily. P-IIIc sub-subfamily. As to quaternary structure, homodimer; disulfide-linked. Zn(2+) is required as a cofactor. As to expression, expressed by the venom gland.

Its subcellular location is the secreted. Functionally, snake venom zinc metalloprotease that induces apoptosis in vascular endothelial cells (VEC), without degrading the extracellular matrix (it cannot cleave collagen) or inhibiting adhesion of VEC. Has also fibrinogenolytic and hemorrhagic activities. The sequence is that of Zinc metalloproteinase-disintegrin-like batroxstatin-2 from Bothrops atrox (Barba amarilla).